The following is a 117-amino-acid chain: Mitochondrial import inner membrane translocase subunit Tim10B (117 aa).

The Twin CX3C motif motif lies at 22 to 46 (CFSRCVDNLSQRDLGGHEDLCVDRC). Cystine bridges form between cysteine 22/cysteine 46 and cysteine 26/cysteine 42. The span at 75 to 97 (EMEENARKAEQQQREQEKERLKE) shows a compositional bias: basic and acidic residues. Residues 75–117 (EMEENARKAEQQQREQEKERLKEAAATAVLTPVQPPVAGNLSM) are disordered.

The protein belongs to the small Tim family. As to quaternary structure, component of the TIM22 complex, whose core is composed of Tim22, associated with peripheral protein Tim9b/Tim10b and the 70 kDa heterohexamer. In most cases, the 70 kDa complex is composed of TIMM9 and TIMM10.

The protein resides in the mitochondrion inner membrane. Component of the TIM22 complex, a complex that mediates the import and insertion of multi-pass transmembrane proteins into the mitochondrial inner membrane. The TIM22 complex forms a twin-pore translocase that uses the membrane potential as the external driving force. In the TIM22 complex, it may act as a docking point for the soluble 70 kDa complex that guides the target proteins in transit through the aqueous mitochondrial intermembrane space. The chain is Mitochondrial import inner membrane translocase subunit Tim10B (Tim9b) from Drosophila melanogaster (Fruit fly).